Reading from the N-terminus, the 161-residue chain is Phenolic acid decarboxylase PadC (161 aa).

Substrate-binding residues include tyrosine 11 and tyrosine 13. Catalysis depends on tyrosine 19, which acts as the Proton donor. A substrate-binding site is contributed by arginine 41. Residue glutamate 64 is the Proton acceptor of the active site.

Belongs to the PadC family. In terms of assembly, homodimer.

The catalysed reaction is (E)-4-coumarate + H(+) = 4-vinylphenol + CO2. It carries out the reaction (E)-cinnamate + H(+) = styrene + CO2. It catalyses the reaction (E)-ferulate + H(+) = 2-methoxy-4-vinylphenol + CO2. Involved in the decarboxylation and detoxification of phenolic derivatives. It is able to catalyze the decarboxylation of ferulic, p-coumaric and caffeic acids. The protein is Phenolic acid decarboxylase PadC (padC) of Bacillus subtilis (strain 168).